Reading from the N-terminus, the 150-residue chain is UPF0178 protein ASA_3749 (150 aa).

The protein belongs to the UPF0178 family.

This chain is UPF0178 protein ASA_3749, found in Aeromonas salmonicida (strain A449).